Consider the following 211-residue polypeptide: Regulator of G-protein signaling 2 (211 aa).

2 disordered regions span residues 14-33 (GPMDKGAGTGPKNEEKREKM) and 49-71 (LQNSSSPGKPKTGKKSKQQTFIK). The necessary for membrane association stretch occupies residues 32 to 66 (KMKRTLLKDWKSRLSYFLQNSSSPGKPKTGKKSKQ). The necessary to inhibit protein synthesis stretch occupies residues 79 to 116 (LWSEAFDELLASKYGLAAFRAFLKSEFCEENIEFWLAC). One can recognise an RGS domain in the interval 83–199 (AFDELLASKY…LESEFYQDLC (117 aa)).

In terms of assembly, interacts with GNAQ. Does not interact with GNAI1 and GNAI3. Interacts with EIF2B5. Interacts with PRKG1 (isoform alpha). Post-translationally, phosphorylated by protein kinase C. Phosphorylation by PRKG1 leads to activation of RGS2 activity.

It localises to the cell membrane. Its subcellular location is the cytoplasm. The protein localises to the nucleus. It is found in the nucleolus. Functionally, regulates G protein-coupled receptor signaling cascades. Inhibits signal transduction by increasing the GTPase activity of G protein alpha subunits, thereby driving them into their inactive GDP-bound form. It is involved in the negative regulation of the angiotensin-activated signaling pathway. Plays a role in the regulation of blood pressure in response to signaling via G protein-coupled receptors and GNAQ. Plays a role in regulating the constriction and relaxation of vascular smooth muscle. Binds EIF2B5 and blocks its activity, thereby inhibiting the translation of mRNA into protein. This is Regulator of G-protein signaling 2 (RGS2) from Bos taurus (Bovine).